Here is a 285-residue protein sequence, read N- to C-terminus: Foldase protein PrsA 2 (285 aa).

The N-terminal stretch at 1 to 20 (MRGKHIFIITALISILMLSA) is a signal peptide. The N-palmitoyl cysteine moiety is linked to residue Cys21. A lipid anchor (S-diacylglycerol cysteine) is attached at Cys21. A PpiC domain is found at 134-224 (KPEIKASHIL…NGYHVIKLTD (91 aa)).

The protein belongs to the PrsA family.

Its subcellular location is the cell membrane. It carries out the reaction [protein]-peptidylproline (omega=180) = [protein]-peptidylproline (omega=0). Plays a major role in protein secretion by helping the post-translocational extracellular folding of several secreted proteins. This Bacillus cereus (strain ATCC 14579 / DSM 31 / CCUG 7414 / JCM 2152 / NBRC 15305 / NCIMB 9373 / NCTC 2599 / NRRL B-3711) protein is Foldase protein PrsA 2 (prsA2).